The sequence spans 60 residues: MSTEKRIEATAKNIEGKLQEVIGEVTGNPSDKAEGKAKQAESQVIHTTENIKDELKKAID.

The protein belongs to the UPF0337 (CsbD) family.

The chain is UPF0337 protein asr4653 from Nostoc sp. (strain PCC 7120 / SAG 25.82 / UTEX 2576).